The following is a 358-amino-acid chain: 3-dehydroquinate synthase (358 aa).

NAD(+)-binding positions include 105–109 (GVVGD), 129–130 (TT), Lys142, Lys151, and 169–172 (TLKT). Zn(2+)-binding residues include Glu184, His245, and His262.

Belongs to the sugar phosphate cyclases superfamily. Dehydroquinate synthase family. The cofactor is NAD(+). It depends on Co(2+) as a cofactor. Zn(2+) serves as cofactor.

The protein localises to the cytoplasm. The catalysed reaction is 7-phospho-2-dehydro-3-deoxy-D-arabino-heptonate = 3-dehydroquinate + phosphate. The protein operates within metabolic intermediate biosynthesis; chorismate biosynthesis; chorismate from D-erythrose 4-phosphate and phosphoenolpyruvate: step 2/7. Functionally, catalyzes the conversion of 3-deoxy-D-arabino-heptulosonate 7-phosphate (DAHP) to dehydroquinate (DHQ). The polypeptide is 3-dehydroquinate synthase (Enterococcus faecalis (strain ATCC 700802 / V583)).